The primary structure comprises 661 residues: Ubiquitin-associated and SH3 domain-containing protein A (661 aa).

Residues 15-60 (KLKSRSSPSLLEPLLAMGFPVHTALKALAATGRKTAEEALAWLHDH) form the UBA domain. The SH3 domain maps to 276 to 341 (VHYQTLRALF…PENYTDRASE (66 aa)). The tract at residues 395 to 661 (RKSVLVVRHG…FNWRNWISGN (267 aa)) is phosphatase-like.

In terms of assembly, homodimer or homooligomer. Interacts with CBL. Part of a complex containing CBL and activated EGFR. Interacts with ubiquitin and with mono-ubiquitinated proteins. Interacts with dynamin. In terms of tissue distribution, highest expression of UBASH3A in tissues belonging to the immune system, including spleen, peripheral blood leukocytes, thymus and bone marrow.

Its subcellular location is the cytoplasm. The protein resides in the nucleus. Functionally, interferes with CBL-mediated down-regulation and degradation of receptor-type tyrosine kinases. Promotes accumulation of activated target receptors, such as T-cell receptors, EGFR and PDGFRB, on the cell surface. Exhibits negligible protein tyrosine phosphatase activity at neutral pH. May act as a dominant-negative regulator of UBASH3B-dependent dephosphorylation. May inhibit dynamin-dependent endocytic pathways by functionally sequestering dynamin via its SH3 domain. The chain is Ubiquitin-associated and SH3 domain-containing protein A (UBASH3A) from Homo sapiens (Human).